A 166-amino-acid polypeptide reads, in one-letter code: Large ribosomal subunit protein uL10 (166 aa).

Belongs to the universal ribosomal protein uL10 family. In terms of assembly, part of the ribosomal stalk of the 50S ribosomal subunit. The N-terminus interacts with L11 and the large rRNA to form the base of the stalk. The C-terminus forms an elongated spine to which L12 dimers bind in a sequential fashion forming a multimeric L10(L12)X complex.

Forms part of the ribosomal stalk, playing a central role in the interaction of the ribosome with GTP-bound translation factors. In Pseudomonas paraeruginosa (strain DSM 24068 / PA7) (Pseudomonas aeruginosa (strain PA7)), this protein is Large ribosomal subunit protein uL10.